Here is a 317-residue protein sequence, read N- to C-terminus: Apolipoprotein E (317 aa).

A signal peptide spans 1 to 18; sequence MKVLWAALLVTFLAGCQA. 8 tandem repeats follow at residues 80–101, 102–123, 124–145, 146–167, 168–189, 190–211, 212–233, and 234–255. The segment at 80-255 is 8 X 22 AA approximate tandem repeats; it reads TLMDETMKEL…RLDEVKEQVA (176 aa). Methionine 143 carries the post-translational modification Methionine sulfoxide. Serine 147 is modified (phosphoserine). The LDL and other lipoprotein receptors binding stretch occupies residues 158-168; that stretch reads HLRKLRKRLLR. A heparin-binding site is contributed by 162–165; that stretch reads LRKR. The tract at residues 210–290 is lipid-binding and lipoprotein association; that stretch reads AATVGSLASQ…SWFEPLVEDM (81 aa). Residue threonine 212 is glycosylated (O-linked (GalNAc...) threonine). 229-236 provides a ligand contact to heparin; the sequence is GERLRARM. The tract at residues 266–317 is homooligomerization; that stretch reads QQISLQAEAFQARLKSWFEPLVEDMQRQWAGLVEKVQAAVGASTAPVPSDNH. The tract at residues 278–290 is specificity for association with VLDL; it reads RLKSWFEPLVEDM.

The protein belongs to the apolipoprotein A1/A4/E family. In terms of assembly, homotetramer. May interact with ABCA1; functionally associated with ABCA1 in the biogenesis of HDLs. May interact with APP/A4 amyloid-beta peptide; the interaction is extremely stable in vitro but its physiological significance is unclear. May interact with MAPT. May interact with MAP2. In the cerebrospinal fluid, interacts with secreted SORL1. Interacts with PMEL; this allows the loading of PMEL luminal fragment on ILVs to induce fibril nucleation. Post-translationally, APOE exists as multiple glycosylated and sialylated glycoforms within cells and in plasma. The extent of glycosylation and sialylation are tissue and context specific. Glycated in plasma VLDL. In terms of processing, phosphorylated by FAM20C in the extracellular medium.

Its subcellular location is the secreted. The protein localises to the extracellular space. It is found in the extracellular matrix. The protein resides in the extracellular vesicle. It localises to the endosome. Its subcellular location is the multivesicular body. In terms of biological role, APOE is an apolipoprotein, a protein associating with lipid particles, that mainly functions in lipoprotein-mediated lipid transport between organs via the plasma and interstitial fluids. APOE is a core component of plasma lipoproteins and is involved in their production, conversion and clearance. Apolipoproteins are amphipathic molecules that interact both with lipids of the lipoprotein particle core and the aqueous environment of the plasma. As such, APOE associates with chylomicrons, chylomicron remnants, very low density lipoproteins (VLDL) and intermediate density lipoproteins (IDL) but shows a preferential binding to high-density lipoproteins (HDL). It also binds a wide range of cellular receptors including the LDL receptor/LDLR, the LDL receptor-related proteins LRP1, LRP2 and LRP8 and the very low-density lipoprotein receptor/VLDLR that mediate the cellular uptake of the APOE-containing lipoprotein particles. Finally, APOE also has a heparin-binding activity and binds heparan-sulfate proteoglycans on the surface of cells, a property that supports the capture and the receptor-mediated uptake of APOE-containing lipoproteins by cells. A main function of APOE is to mediate lipoprotein clearance through the uptake of chylomicrons, VLDLs, and HDLs by hepatocytes. APOE is also involved in the biosynthesis by the liver of VLDLs as well as their uptake by peripheral tissues ensuring the delivery of triglycerides and energy storage in muscle, heart and adipose tissues. By participating in the lipoprotein-mediated distribution of lipids among tissues, APOE plays a critical role in plasma and tissues lipid homeostasis. APOE is also involved in two steps of reverse cholesterol transport, the HDLs-mediated transport of cholesterol from peripheral tissues to the liver, and thereby plays an important role in cholesterol homeostasis. First, it is functionally associated with ABCA1 in the biogenesis of HDLs in tissues. Second, it is enriched in circulating HDLs and mediates their uptake by hepatocytes. APOE also plays an important role in lipid transport in the central nervous system, regulating neuron survival and sprouting. In Macaca nemestrina (Pig-tailed macaque), this protein is Apolipoprotein E (APOE).